The chain runs to 203 residues: Glycerol-3-phosphate acyltransferase (203 aa).

Transmembrane regions (helical) follow at residues 10-30 (LLAL…GLLI), 59-79 (PAAA…VILA), 87-107 (AAQI…YLKF), 116-136 (FFGT…AIWL), and 168-188 (LVVL…ENII).

It belongs to the PlsY family. In terms of assembly, probably interacts with PlsX.

It is found in the cell inner membrane. The enzyme catalyses an acyl phosphate + sn-glycerol 3-phosphate = a 1-acyl-sn-glycero-3-phosphate + phosphate. The protein operates within lipid metabolism; phospholipid metabolism. In terms of biological role, catalyzes the transfer of an acyl group from acyl-phosphate (acyl-PO(4)) to glycerol-3-phosphate (G3P) to form lysophosphatidic acid (LPA). This enzyme utilizes acyl-phosphate as fatty acyl donor, but not acyl-CoA or acyl-ACP. This chain is Glycerol-3-phosphate acyltransferase, found in Dinoroseobacter shibae (strain DSM 16493 / NCIMB 14021 / DFL 12).